The following is a 422-amino-acid chain: Serine hydroxymethyltransferase (422 aa).

A (6S)-5,6,7,8-tetrahydrofolate-binding site is contributed by G121–I123. K227 is subject to N6-(pyridoxal phosphate)lysine. E245 serves as a coordination point for (6S)-5,6,7,8-tetrahydrofolate.

This sequence belongs to the SHMT family. Homodimer. Requires pyridoxal 5'-phosphate as cofactor.

It is found in the cytoplasm. The enzyme catalyses 5,10-methylenetetrahydromethanopterin + glycine + H2O = 5,6,7,8-tetrahydromethanopterin + L-serine. Its pathway is amino-acid biosynthesis; glycine biosynthesis; glycine from L-serine: step 1/1. Its function is as follows. Catalyzes the reversible interconversion of serine and glycine with tetrahydromethanopterin (H4MPT) serving as the one-carbon carrier. Also exhibits a pteridine-independent aldolase activity toward beta-hydroxyamino acids, producing glycine and aldehydes, via a retro-aldol mechanism. The sequence is that of Serine hydroxymethyltransferase from Methanobrevibacter smithii (strain ATCC 35061 / DSM 861 / OCM 144 / PS).